The chain runs to 266 residues: Indole-3-glycerol phosphate synthase (266 aa).

The protein belongs to the TrpC family.

It carries out the reaction 1-(2-carboxyphenylamino)-1-deoxy-D-ribulose 5-phosphate + H(+) = (1S,2R)-1-C-(indol-3-yl)glycerol 3-phosphate + CO2 + H2O. It participates in amino-acid biosynthesis; L-tryptophan biosynthesis; L-tryptophan from chorismate: step 4/5. This chain is Indole-3-glycerol phosphate synthase, found in Herminiimonas arsenicoxydans.